Reading from the N-terminus, the 498-residue chain is ATP synthase subunit beta, chloroplastic (498 aa).

172 to 179 (GGAGVGKT) provides a ligand contact to ATP.

The protein belongs to the ATPase alpha/beta chains family. F-type ATPases have 2 components, CF(1) - the catalytic core - and CF(0) - the membrane proton channel. CF(1) has five subunits: alpha(3), beta(3), gamma(1), delta(1), epsilon(1). CF(0) has four main subunits: a(1), b(1), b'(1) and c(9-12).

It is found in the plastid. Its subcellular location is the chloroplast thylakoid membrane. It catalyses the reaction ATP + H2O + 4 H(+)(in) = ADP + phosphate + 5 H(+)(out). Produces ATP from ADP in the presence of a proton gradient across the membrane. The catalytic sites are hosted primarily by the beta subunits. The protein is ATP synthase subunit beta, chloroplastic of Balaka seemannii.